We begin with the raw amino-acid sequence, 101 residues long: Large ribosomal subunit protein eL30 (101 aa).

The protein belongs to the eukaryotic ribosomal protein eL30 family.

This chain is Large ribosomal subunit protein eL30, found in Pyrobaculum islandicum (strain DSM 4184 / JCM 9189 / GEO3).